The primary structure comprises 2183 residues: Genome polyprotein (2183 aa).

Residue glycine 2 is the site of N-myristoyl glycine; by host attachment. The Cytoplasmic portion of the chain corresponds to 2-1493; sequence GAQVSTQKTG…HVSRAFICLQ (1492 aa). The interval 566–582 is amphipathic alpha-helix; sequence FYQGPTEESVERAMGRV. Catalysis depends on for protease 2A activity residues histidine 870 and aspartate 888. Zn(2+) is bound by residues cysteine 905 and cysteine 907. Cysteine 959 functions as the For protease 2A activity in the catalytic mechanism. 2 residues coordinate Zn(2+): cysteine 965 and histidine 967. The interval 1099–1171 is membrane-binding; it reads NNGWLKKFTE…EQSAPSQSDQ (73 aa). Positions 1099 to 1237 are oligomerization; sequence NNGWLKKFTE…SPGAGKSVAT (139 aa). Residues 1120–1124 form an RNA-binding region; it reads AVKIQ. An SF3 helicase domain is found at 1203 to 1359; it reads EKKMSNYIQF…SMYSQNGKIN (157 aa). The Zn(2+) site is built by cysteine 1367, cysteine 1379, and cysteine 1384. The segment at 1367–1384 adopts a C4-type; degenerate zinc-finger fold; that stretch reads CDEECCPVNFKRCCPLVC. Positions 1411–1418 are RNA-binding; sequence EYNHRHSV. The oligomerization stretch occupies residues 1422–1427; it reads LEALFQ. Residues 1494–1509 lie within the membrane without spanning it; sequence ALTTFVSVAGIIYIIY. Topologically, residues 1510–2183 are cytoplasmic; sequence KLFAGFQGAY…TLRRKWLDSF (674 aa). O-(5'-phospho-RNA)-tyrosine is present on tyrosine 1519. The region spanning 1539-1717 is the Peptidase C3 domain; that stretch reads GPAFEFAVAM…FSAGLLKHYF (179 aa). Residues histidine 1578, glutamate 1609, and cysteine 1685 each act as for protease 3C activity in the active site. One can recognise a RdRp catalytic domain in the interval 1948–2064; it reads GHLIAFDYSG…SYPWPIDASL (117 aa). Residues aspartate 1954 and aspartate 2050 each coordinate Mg(2+).

The protein belongs to the picornaviruses polyprotein family. In terms of assembly, interacts with capsid protein VP1 and capsid protein VP3 to form heterotrimeric protomers. Interacts with capsid protein VP0, and capsid protein VP3 to form heterotrimeric protomers. Five protomers subsequently associate to form pentamers which serve as building blocks for the capsid. Interacts with capsid protein VP2, capsid protein VP3 and capsid protein VP4 following cleavage of capsid protein VP0. Interacts with host CXADR. As to quaternary structure, interacts with capsid protein VP1 and capsid protein VP3 in the mature capsid. In terms of assembly, interacts with capsid protein VP0 and capsid protein VP1 to form heterotrimeric protomers. Five protomers subsequently associate to form pentamers which serve as building blocks for the capsid. Interacts with capsid protein VP4 in the mature capsid. Interacts with protein 2C; this interaction may be important for virion morphogenesis. Interacts with capsid protein VP1 and capsid protein VP3. As to quaternary structure, homodimer. In terms of assembly, homohexamer; forms a hexameric ring structure with 6-fold symmetry characteristic of AAA+ ATPases. Interacts (via N-terminus) with host RTN3 (via reticulon domain); this interaction is important for viral replication. Interacts with capsid protein VP3; this interaction may be important for virion morphogenesis. Interacts with protein 3CD. As to quaternary structure, homodimer. Interacts with host GBF1. Interacts (via GOLD domain) with host ACBD3 (via GOLD domain); this interaction allows the formation of a viral protein 3A/ACBD3 heterotetramer with a 2:2 stoichiometry, which will stimulate the recruitment of host PI4KB in order to synthesize PI4P at the viral RNA replication sites. In terms of assembly, interacts with RNA-directed RNA polymerase. Interacts with protein 3AB and with RNA-directed RNA polymerase. As to quaternary structure, interacts with Viral protein genome-linked and with protein 3CD. It depends on Mg(2+) as a cofactor. Post-translationally, specific enzymatic cleavages in vivo by the viral proteases yield processing intermediates and the mature proteins. Myristoylation is required for the formation of pentamers during virus assembly. Further assembly of 12 pentamers and a molecule of genomic RNA generates the provirion. In terms of processing, during virion maturation, immature virions are rendered infectious following cleavage of VP0 into VP4 and VP2. This maturation seems to be an autocatalytic event triggered by the presence of RNA in the capsid and it is followed by a conformational change infectious virion. Post-translationally, myristoylation is required during RNA encapsidation and formation of the mature virus particle. VPg is uridylylated by the polymerase into VPg-pUpU. This acts as a nucleotide-peptide primer for the genomic RNA replication.

Its subcellular location is the virion. The protein localises to the host cytoplasm. The protein resides in the host cytoplasmic vesicle membrane. It is found in the host nucleus. It catalyses the reaction a ribonucleoside 5'-triphosphate + H2O = a ribonucleoside 5'-diphosphate + phosphate + H(+). It carries out the reaction Selective cleavage of Tyr-|-Gly bond in the picornavirus polyprotein.. The enzyme catalyses RNA(n) + a ribonucleoside 5'-triphosphate = RNA(n+1) + diphosphate. The catalysed reaction is Selective cleavage of Gln-|-Gly bond in the poliovirus polyprotein. In other picornavirus reactions Glu may be substituted for Gln, and Ser or Thr for Gly.. Replication or transcription is subject to high level of random mutations by the nucleotide analog ribavirin. Functionally, forms an icosahedral capsid of pseudo T=3 symmetry with capsid proteins VP2 and VP3. The capsid is 300 Angstroms in diameter, composed of 60 copies of each capsid protein and enclosing the viral positive strand RNA genome. Capsid protein VP1 mainly forms the vertices of the capsid. Capsid protein VP1 interacts with host CXADR to provide virion attachment to target host cells. This attachment induces virion internalization. Tyrosine kinases are probably involved in the entry process. After binding to its receptor, the capsid undergoes conformational changes. Capsid protein VP1 N-terminus (that contains an amphipathic alpha-helix) and capsid protein VP4 are externalized. Together, they shape a pore in the host membrane through which viral genome is translocated to host cell cytoplasm. In terms of biological role, forms an icosahedral capsid of pseudo T=3 symmetry with capsid proteins VP2 and VP3. The capsid is 300 Angstroms in diameter, composed of 60 copies of each capsid protein and enclosing the viral positive strand RNA genome. Its function is as follows. Lies on the inner surface of the capsid shell. After binding to the host receptor, the capsid undergoes conformational changes. Capsid protein VP4 is released, Capsid protein VP1 N-terminus is externalized, and together, they shape a pore in the host membrane through which the viral genome is translocated into the host cell cytoplasm. Component of immature procapsids, which is cleaved into capsid proteins VP4 and VP2 after maturation. Allows the capsid to remain inactive before the maturation step. Functionally, cysteine protease that cleaves viral polyprotein and specific host proteins. It is responsible for the autocatalytic cleavage between the P1 and P2 regions, which is the first cleavage occurring in the polyprotein. Also cleaves the host translation initiation factor EIF4G1, in order to shut down the capped cellular mRNA translation. Inhibits the host nucleus-cytoplasm protein and RNA trafficking by cleaving host members of the nuclear pores. Counteracts stress granule formation probably by antagonizing its assembly or promoting its dissassembly. Cleaves and inhibits host IFIH1/MDA5, thereby inhibiting the type-I IFN production and the establishment of the antiviral state. Cleaves and inhibits host MAVS, thereby inhibiting the type-I IFN production and the establishment of the antiviral state. In terms of biological role, plays an essential role in the virus replication cycle by acting as a viroporin. Creates a pore in the host endoplasmic reticulum and as a consequence releases Ca2+ in the cytoplasm of infected cell. In turn, high levels of cytoplasmic calcium may trigger membrane trafficking and transport of viral ER-associated proteins to viroplasms, sites of viral genome replication. Its function is as follows. Induces and associates with structural rearrangements of intracellular membranes. Displays RNA-binding, nucleotide binding and NTPase activities. May play a role in virion morphogenesis and viral RNA encapsidation by interacting with the capsid protein VP3. Localizes the viral replication complex to the surface of membranous vesicles. Together with protein 3CD binds the Cis-Active RNA Element (CRE) which is involved in RNA synthesis initiation. Acts as a cofactor to stimulate the activity of 3D polymerase, maybe through a nucleid acid chaperone activity. Functionally, localizes the viral replication complex to the surface of membranous vesicles. It inhibits host cell endoplasmic reticulum-to-Golgi apparatus transport and causes the disassembly of the Golgi complex, possibly through GBF1 interaction. This would result in depletion of MHC, trail receptors and IFN receptors at the host cell surface. Plays an essential role in viral RNA replication by recruiting ACBD3 and PI4KB at the viral replication sites, thereby allowing the formation of the rearranged membranous structures where viral replication takes place. In terms of biological role, acts as a primer for viral RNA replication and remains covalently bound to viral genomic RNA. VPg is uridylylated prior to priming replication into VPg-pUpU. The oriI viral genomic sequence may act as a template for this. The VPg-pUpU is then used as primer on the genomic RNA poly(A) by the RNA-dependent RNA polymerase to replicate the viral genome. During genome replication, the VPg-RNA linkage is removed by the host TDP2, thereby accelerating replication. During the late stage of the replication cycle, host TDP2 is excluded from sites of viral RNA synthesis and encapsidation, allowing for the generation of progeny virions. Its function is as follows. Involved in the viral replication complex and viral polypeptide maturation. It exhibits protease activity with a specificity and catalytic efficiency that is different from protease 3C. Protein 3CD lacks polymerase activity. Protein 3CD binds to the 5'UTR of the viral genome. Replicates the viral genomic RNA on the surface of intracellular membranes. May form linear arrays of subunits that propagate along a strong head-to-tail interaction called interface-I. Covalently attaches UMP to a tyrosine of VPg, which is used to prime RNA synthesis. The positive stranded RNA genome is first replicated at virus induced membranous vesicles, creating a dsRNA genomic replication form. This dsRNA is then used as template to synthesize positive stranded RNA genomes. ss(+)RNA genomes are either translated, replicated or encapsidated. Functionally, major viral protease that mediates proteolytic processing of the polyprotein. Cleaves host EIF5B, contributing to host translation shutoff. Also cleaves host PABPC1, contributing to host translation shutoff. Cleaves host NLRP1, triggers host N-glycine-mediated degradation of the autoinhibitory NLRP1 N-terminal fragment. In Coxsackievirus B4 (strain JVB / Benschoten / New York/51), this protein is Genome polyprotein.